The sequence spans 1118 residues: Collagenase ColG (1118 aa).

A signal peptide spans 1–45 (MKKNILKILMDSYSKESKIQTVRRVTSVSLLAVYLTMNTSSLVLA). The propeptide occupies 46–110 (KPIENTNDTS…KSKSTLRSAS (65 aa)). Residues 111 to 786 (IANTNSEKYD…QYDVVFHGVL (676 aa)) form an S1 metalloprotease domain, degrades both FALGPA (furylacryloyl-Leu-Gly-Pro-Ala) and type I collagen region. An activator domain required for full activity on collagen region spans residues 119–388 (YDFEYLNGLS…AMERITWDYD (270 aa)). The interval 389-670 (GIGSNGKKVD…IQELADKYQG (282 aa)) is catalytic subdomain. Residues 396-1118 (KVDHDKFLDD…SGNYELRVNK (723 aa)) are degrades soluble FALGPA peptide (furylacryloyl-Leu-Gly-Pro-Ala) but not type I collagen. Glutamate 498 provides a ligand contact to Ca(2+). Histidine 523 serves as a coordination point for Zn(2+). Residue glutamate 524 is part of the active site. Histidine 527 is a Zn(2+) binding site. Residues alanine 531, valine 535, and glycine 537 each coordinate Ca(2+). Zn(2+) is bound at residue glutamate 555. Positions 679 to 790 (DYLKDHGYKK…VFHGVLTDNA (112 aa)) are helper subdomain. Residues 787-882 (TDNADISNNK…SFTIEIKNED (96 aa)) are S2 domain. Ca(2+)-binding residues include asparagine 795, lysine 796, aspartate 823, aspartate 825, aspartate 864, glutamate 890, glutamate 892, asparagine 894, aspartate 913, aspartate 918, alanine 920, aspartate 921, glutamate 1009, glutamate 1011, asparagine 1013, aspartate 1014, serine 1032, aspartate 1037, arginine 1039, and aspartate 1040. The PKD domain occupies 797-885 (APIAKVTGPS…IEIKNEDTTT (89 aa)). Positions 886-1003 (PITKEMEPND…SYSLNIKGLG (118 aa)) are S3a collagen-binding domain. Positions 1008 to 1118 (KEKENNDSSD…SGNYELRVNK (111 aa)) are S3b collagen-binding domain. The tract at residues 1102 to 1106 (LVYKY) is collagen-binding.

This sequence belongs to the peptidase M9B family. Collagenase subfamily. The cofactor is Ca(2+). Zn(2+) serves as cofactor. Upon purification gives 67 kDa, 78 kDa, 82 kDa and 116 kDa (full-length) proteins all of which have the same N-terminus; only the longest form digests insoluble collagen. At least 2 in vivo isolated forms (C1b and C1c) are missing the second collagen-binding domain, ending on Lys-1006 and Lys-1018 respectively.

It is found in the secreted. The enzyme catalyses Digestion of native collagen in the triple helical region at Xaa-|-Gly bonds. With synthetic peptides, a preference is shown for Gly at P3 and P1', Pro and Ala at P2 and P2', and hydroxyproline, Ala or Arg at P3'.. With respect to regulation, inhibited by 1-10-phenanthroline. Inhibited by peptidomimetic isoamyl-phosphonyl-Gly-Pro-Ala, which binds to Zn(2+). Inhibited by broad-spectrum zinc metalloprotease inhibitor batimastat. N-aryl mercaptoacetamide-based inhibitors have been isolated that act on clostridial collagenases with submicromolar affinity while having negligibile activity on human collagenases. Its function is as follows. Clostridial collagenases are among the most efficient degraders of eukaryotic collagen known; saprophytes use collagen as a carbon source while pathogens additionally digest collagen to aid in host colonization. Has both tripeptidylcarboxypeptidase on Gly-X-Y and endopeptidase activities; the endopeptidase cuts within the triple helix region of collagen while tripeptidylcarboxypeptidase successively digests the exposed ends, thus clostridial collagenases can digest large sections of collagen. Active on soluble type I collagen, insoluble collagen, azocoll, soluble PZ-peptide (all collagenase substrates) and gelatin. The full-length protein has collagenase activity, while the in vivo derived C-terminally truncated shorter versions only act on gelatin. In vitro digestion of soluble calf skin collagen fibrils requires both ColG and ColH; ColG forms missing the second collagen-binding domain are also synergistic with ColH, although their overall efficiency is decreased. The activator domain (residues 119-388) and catalytic subdomain (389-670) open and close around substrate using a Gly-rich hinge (387-397), allowing digestion when the protein is closed. Binding of collagen requires Ca(2+) and is inhibited by EGTA; the collagen-binding domain (CBD, S3a plus S3b) specifically recognizes the triple-helical conformation made by 3 collagen protein chains in the triple-helical region. Isolated CBD (S3a plus S3b) binds collagen fibrils and sheets of many tissues. This is Collagenase ColG from Hathewaya histolytica (Clostridium histolyticum).